The sequence spans 491 residues: Serine/threonine-protein kinase 3/4 (491 aa).

The segment at 1–24 (MEEVQRRQHPHPRRSLKKLSEDSL) is disordered. The segment covering 7-17 (RQHPHPRRSLK) has biased composition (basic residues). The 252-residue stretch at 32–283 (FDVLEKLGEG…ATQLLQHPFI (252 aa)) folds into the Protein kinase domain. ATP contacts are provided by residues 38–46 (LGEGSYGSV) and K61. D151 functions as the Proton acceptor in the catalytic mechanism. Position 185 is a phosphothreonine; by autocatalysis (T185). Positions 292-334 (LRDLITDMMEIKLKRQEEQQRDLDQDDEENSEEDDMDSGTMVR) form a coiled coil. Disordered stretches follow at residues 307–394 (QEEQ…IQQS) and 406–435 (EKEN…PQDG). Acidic residues predominate over residues 315–328 (DQDDEENSEEDDMD). 2 stretches are compositionally biased toward polar residues: residues 363 to 373 (TLDSQMGTMVI) and 410 to 428 (QANS…SSDN). In terms of domain architecture, SARAH spans 437–484 (FESLKSWSVEELQRRLASLDPTMEQEIEEIRQRYQAKRQPILDAIDAK). The stretch at 442-475 (SWSVEELQRRLASLDPTMEQEIEEIRQRYQAKRQ) forms a coiled coil.

Belongs to the protein kinase superfamily. STE Ser/Thr protein kinase family. STE20 subfamily. In terms of assembly, homodimer; mediated via the coiled-coil region. Mg(2+) serves as cofactor. Post-translationally, proteolytically cleaved by caspase-3 during apoptosis at Asp-328 resulting in a 37 kDa form. Proteolytic cleavage results in kinase activation and nuclear translocation of the truncated form (MST1/N).

It is found in the cytoplasm. It localises to the nucleus. It catalyses the reaction L-seryl-[protein] + ATP = O-phospho-L-seryl-[protein] + ADP + H(+). It carries out the reaction L-threonyl-[protein] + ATP = O-phospho-L-threonyl-[protein] + ADP + H(+). Its activity is regulated as follows. Inhibited by the C-terminal non-catalytic region. Activated by caspase-cleavage. Full activation also requires homodimerization and autophosphorylation of Thr-185. Its function is as follows. Stress-activated, pro-apoptotic kinase which, following caspase-cleavage, enters the nucleus and induces chromatin condensation followed by internucleosomal DNA fragmentation. Key component of the Hippo signaling pathway which plays a pivotal role in organ size control and tumor suppression by restricting proliferation and promoting apoptosis. The core of this pathway is composed of a kinase cascade wherein stk3/mst2 and stk4/mst1, in complex with its regulatory protein sav1, phosphorylates and activates lats1/2 in complex with its regulatory protein mob1, which in turn phosphorylates and inactivates yap1 oncoprotein and wwtr1/taz. Phosphorylation of yap1 by lats2 inhibits its translocation into the nucleus to regulate cellular genes important for cell proliferation, cell death, and cell migration. Phosphorylates 'Ser-14' of histone H2B (H2BS14ph) during apoptosis. This is Serine/threonine-protein kinase 3/4 (STK4) from Squalus acanthias (Spiny dogfish).